A 75-amino-acid polypeptide reads, in one-letter code: Translation initiation factor IF-1 (75 aa).

The S1-like domain occupies 1–72 (MSKQDLIEME…TKGRITYRLK (72 aa)).

Belongs to the IF-1 family. In terms of assembly, component of the 30S ribosomal translation pre-initiation complex which assembles on the 30S ribosome in the order IF-2 and IF-3, IF-1 and N-formylmethionyl-tRNA(fMet); mRNA recruitment can occur at any time during PIC assembly.

It localises to the cytoplasm. Its function is as follows. One of the essential components for the initiation of protein synthesis. Stabilizes the binding of IF-2 and IF-3 on the 30S subunit to which N-formylmethionyl-tRNA(fMet) subsequently binds. Helps modulate mRNA selection, yielding the 30S pre-initiation complex (PIC). Upon addition of the 50S ribosomal subunit IF-1, IF-2 and IF-3 are released leaving the mature 70S translation initiation complex. The sequence is that of Translation initiation factor IF-1 from Synechocystis sp. (strain ATCC 27184 / PCC 6803 / Kazusa).